The sequence spans 412 residues: 4-hydroxy-3-methylbut-2-en-1-yl diphosphate synthase (ferredoxin) (412 aa).

Polar residues predominate over residues 1-12; the sequence is MQTLDRPNAPSQ. The tract at residues 1–22 is disordered; the sequence is MQTLDRPNAPSQQPYPEPVYPR. The [4Fe-4S] cluster site is built by C314, C317, C348, and E355.

This sequence belongs to the IspG family. It depends on [4Fe-4S] cluster as a cofactor.

It carries out the reaction (2E)-4-hydroxy-3-methylbut-2-enyl diphosphate + 2 oxidized [2Fe-2S]-[ferredoxin] + H2O = 2-C-methyl-D-erythritol 2,4-cyclic diphosphate + 2 reduced [2Fe-2S]-[ferredoxin] + H(+). It functions in the pathway isoprenoid biosynthesis; isopentenyl diphosphate biosynthesis via DXP pathway; isopentenyl diphosphate from 1-deoxy-D-xylulose 5-phosphate: step 5/6. Functionally, converts 2C-methyl-D-erythritol 2,4-cyclodiphosphate (ME-2,4cPP) into 1-hydroxy-2-methyl-2-(E)-butenyl 4-diphosphate. This Synechococcus sp. (strain JA-3-3Ab) (Cyanobacteria bacterium Yellowstone A-Prime) protein is 4-hydroxy-3-methylbut-2-en-1-yl diphosphate synthase (ferredoxin).